The primary structure comprises 136 residues: Large ribosomal subunit protein uL16 (136 aa).

The protein belongs to the universal ribosomal protein uL16 family. Part of the 50S ribosomal subunit.

Binds 23S rRNA and is also seen to make contacts with the A and possibly P site tRNAs. The polypeptide is Large ribosomal subunit protein uL16 (Rickettsia bellii (strain OSU 85-389)).